The chain runs to 605 residues: Protein cueball (605 aa).

An N-terminal signal peptide occupies residues 1 to 31 (MAYIDQKHNTFWDDFAIALRDKIVFLNSTWG). N27, N64, and N85 each carry an N-linked (GlcNAc...) asparagine glycan. Topologically, residues 32–486 (EIHASAHRFE…QCGPAPPVQG (455 aa)) are extracellular. LDL-receptor class B repeat units follow at residues 53–97 (EMIY…DPLN), 98–145 (RNLF…DICR), 146–190 (RQLY…DQLS), and 191–236 (DRIF…NEDA). N-linked (GlcNAc...) asparagine glycans are attached at residues N261 and N314. EGF-like domains follow at residues 322–359 (EGDR…ARCE) and 394–431 (EYHK…ERCE). Intrachain disulfides connect C334–C347, C349–C358, C398–C408, C402–C419, and C421–C430. N433 and N464 each carry an N-linked (GlcNAc...) asparagine glycan. The helical transmembrane segment at 487 to 507 (PLIIVIVLGLVTTSGLVALTV) threads the bilayer. At 508–605 (HGVRLIYKPK…IHSMEDNLLS (98 aa)) the chain is on the cytoplasmic side.

It belongs to the cueball family.

The protein resides in the cell membrane. Has a role in spermatogenesis and oogenesis. The polypeptide is Protein cueball (Drosophila grimshawi (Hawaiian fruit fly)).